A 441-amino-acid polypeptide reads, in one-letter code: ATP-dependent RNA helicase RhlB (441 aa).

Residues 9–37 (QKFADFSLNKEIKTALNESGFEFCTPIQA) carry the Q motif motif. Residues 40 to 219 (LPILLQKKDI…YDHMNEPEKV (180 aa)) enclose the Helicase ATP-binding domain. Residue 53–60 (AQTGTGKT) participates in ATP binding. The DEAD box motif lies at 165-168 (DEAD). A Helicase C-terminal domain is found at 243-390 (KMRLLLSLIE…VTNYDSEGLL (148 aa)). The tract at residues 401–441 (RKHNNRPQQGRNNSGRPQGRNGNRAGGRNGPRRHDQVRRHS) is disordered.

This sequence belongs to the DEAD box helicase family. RhlB subfamily. In terms of assembly, component of the RNA degradosome, which is a multiprotein complex involved in RNA processing and mRNA degradation.

It localises to the cytoplasm. It carries out the reaction ATP + H2O = ADP + phosphate + H(+). Its function is as follows. DEAD-box RNA helicase involved in RNA degradation. Has RNA-dependent ATPase activity and unwinds double-stranded RNA. The sequence is that of ATP-dependent RNA helicase RhlB from Shewanella woodyi (strain ATCC 51908 / MS32).